The primary structure comprises 468 residues: 6-phospho-beta-galactosidase (468 aa).

Positions 19, 116, 159, 160, and 297 each coordinate D-galactose 6-phosphate. The active-site Proton donor is Glu160. Catalysis depends on Glu375, which acts as the Nucleophile. The D-galactose 6-phosphate site is built by Ser428, Trp429, Lys435, and Tyr437.

This sequence belongs to the glycosyl hydrolase 1 family.

It catalyses the reaction a 6-phospho-beta-D-galactoside + H2O = D-galactose 6-phosphate + an alcohol. It functions in the pathway carbohydrate metabolism; lactose degradation; D-galactose 6-phosphate and beta-D-glucose from lactose 6-phosphate: step 1/1. The chain is 6-phospho-beta-galactosidase from Streptococcus mutans serotype c (strain ATCC 700610 / UA159).